A 217-amino-acid polypeptide reads, in one-letter code: Large ribosomal subunit protein uL3 (217 aa).

The tract at residues 134–154 (DATHGNSLSHRAPGSIGQCQT) is disordered. Position 153 is an N5-methylglutamine (Gln-153).

This sequence belongs to the universal ribosomal protein uL3 family. In terms of assembly, part of the 50S ribosomal subunit. Forms a cluster with proteins L14 and L19. Methylated by PrmB.

One of the primary rRNA binding proteins, it binds directly near the 3'-end of the 23S rRNA, where it nucleates assembly of the 50S subunit. The protein is Large ribosomal subunit protein uL3 of Coxiella burnetii (strain Dugway 5J108-111).